We begin with the raw amino-acid sequence, 417 residues long: Xylulose 5-phosphate/phosphate translocator, chloroplastic (417 aa).

Residues 1 to 82 (MISLNLSPSL…GFSRKPRSIA (82 aa)) constitute a chloroplast transit peptide. A disordered region spans residues 66–102 (TNPESSSGFSRKPRSIAAVGSSDSNPDEKSDLGEAEK). The residue at position 83 (A83) is an N-acetylalanine. Basic and acidic residues predominate over residues 91–102 (PDEKSDLGEAEK). Helical transmembrane passes span 109 to 129 (TLQLGIVFGLWYFQNIVFNIF), 141 to 161 (WLLASFQLFAGSIWMLVLWSF), 173 to 193 (FIIALLGPALFHTIGHISACV), 198 to 218 (VAVSFTHVIKSAEPVFSVIFS), 225 to 245 (YPLAVWLSILPIVMGCSLAAV), 247 to 267 (EVSFNLGGLSGAMISNVGFVL), 287 to 307 (LYGCISILSLLYLFPVAIFVE), 318 to 338 (AIASVGTPSTFYFWVLLSGVF), and 384 to 404 (LNALGSAIAIFGTFLYSQATA). The 117-residue stretch at 127–243 (NIFNKKALNV…LPIVMGCSLA (117 aa)) folds into the EamA domain.

Belongs to the TPT transporter family. TPT (TC 2.A.7.9) subfamily. Widely expressed.

The protein resides in the plastid. It is found in the chloroplast membrane. Functionally, sugar phosphate/phosphate translocator that transports inorganic phosphate, triose phosphate, 3-phosphoglycerate, xylulose 5-phosphate (Xul-5-P) and to a lesser extent ribulose 5-phosphate. Does not transport ribose 5-phosphate or hexose phosphates. Provides cytosolic Xul-5-P to the chloroplast, where it is used as an intermediate in the plastidic pentose phosphate pathways. This is Xylulose 5-phosphate/phosphate translocator, chloroplastic (XPT) from Arabidopsis thaliana (Mouse-ear cress).